Reading from the N-terminus, the 549-residue chain is Probable chaperonin-like protein PrmG (549 aa).

This sequence belongs to the chaperonin (HSP60) family.

Its function is as follows. Probably plays an essential role in the productive folding of PrmA, and thus in the formation of the active PrmABCD complex. This chain is Probable chaperonin-like protein PrmG (prmG), found in Rhodococcus jostii (strain RHA1).